The following is a 682-amino-acid chain: Inactive protein-arginine deiminase type-6 (682 aa).

Phosphoserine occurs at positions 2 and 434.

This sequence belongs to the protein arginine deiminase family. In terms of assembly, homodimers. Associates with alpha-tubulin. In terms of processing, phosphorylation at Ser-2, possibly by RSK-type kinases, and Ser-434 creates binding sites for 14-3-3 proteins. Expressed at very high levels in oocytes. Weakly expressed in testis. Expressed in primordial, primary, secondary and Graafian follicles, and in immature oocytes, mature eggs and blastocyst (at protein level).

It is found in the cytoplasm. It localises to the nucleus. The protein localises to the cytoplasmic vesicle. The protein resides in the secretory vesicle. Its subcellular location is the cortical granule. Functionally, structural constituent of cytoplasmic lattices, which plays a key role in early embryonic development. Cytoplasmic lattices consist in fibrous structures found in the cytoplasm of oocytes and preimplantation embryos. They are required to store maternal proteins critical for embryonic development, such as ribosomal proteins and proteins that control epigenetic reprogramming of the preimplantation embryo, and prevent their degradation or activation. In contrast to other members of the family, does not show protein-arginine deiminase activity due to its inability to bind Ca(2+). The sequence is that of Inactive protein-arginine deiminase type-6 from Mus musculus (Mouse).